The sequence spans 221 residues: MDIEKAASRREEEEPIVQRPKLDKGKGKAHVFAPPMNYNRIMDKHKQEKVSAAGWKRGVAIFDFVLRLIAAITAMAAAAKMATTEETLPFFTQFLQFQAEYTDLPTMSSFVIVNSIVGGYLTLSLPFSIVCILRPLAVPPRLFLIICDTAMMGLTMMAASASAAIVYLAHNGNSSSNWLPVCQQFGDFCQGTSGAVVASFIAATLLMFLVILSAFALKRST.

Residues 1-12 (MDIEKAASRREE) are compositionally biased toward basic and acidic residues. Positions 1–28 (MDIEKAASRREEEEPIVQRPKLDKGKGK) are disordered. At 1–58 (MDIEKAASRREEEEPIVQRPKLDKGKGKAHVFAPPMNYNRIMDKHKQEKVSAAGWKRG) the chain is on the cytoplasmic side. A helical membrane pass occupies residues 59-79 (VAIFDFVLRLIAAITAMAAAA). Topologically, residues 80 to 109 (KMATTEETLPFFTQFLQFQAEYTDLPTMSS) are extracellular. The chain crosses the membrane as a helical span at residues 110–130 (FVIVNSIVGGYLTLSLPFSIV). Residues 131-148 (CILRPLAVPPRLFLIICD) are Cytoplasmic-facing. The chain crosses the membrane as a helical span at residues 149-169 (TAMMGLTMMAASASAAIVYLA). Residues 170–194 (HNGNSSSNWLPVCQQFGDFCQGTSG) are Extracellular-facing. An N-linked (GlcNAc...) asparagine glycan is attached at Asn-173. A helical transmembrane segment spans residues 195–215 (AVVASFIAATLLMFLVILSAF). Over 216 to 221 (ALKRST) the chain is Cytoplasmic.

It belongs to the Casparian strip membrane proteins (CASP) family. As to quaternary structure, homodimer and heterodimers.

It is found in the cell membrane. Functionally, regulates membrane-cell wall junctions and localized cell wall deposition. Required for establishment of the Casparian strip membrane domain (CSD) and the subsequent formation of Casparian strips, a cell wall modification of the root endodermis that determines an apoplastic barrier between the intraorganismal apoplasm and the extraorganismal apoplasm and prevents lateral diffusion. In Arabidopsis lyrata subsp. lyrata (Lyre-leaved rock-cress), this protein is Casparian strip membrane protein 3.